A 20-amino-acid polypeptide reads, in one-letter code: Astacin-like peptidase p18 (20 aa).

The 20-residue stretch at 1-20 (NAIPGNYYRWPYAKVPYVID) folds into the Peptidase M12A domain.

Zn(2+) is required as a cofactor.

Functionally, active against casein. Has a role as a digestive enzyme. The protein is Astacin-like peptidase p18 of Argiope aurantia (Black-and-yellow garden spider).